A 332-amino-acid chain; its full sequence is Malate dehydrogenase (332 aa).

NAD(+)-binding positions include 16-17 (QI), Asp-43, and Gly-90. Arg-99 is an oxaloacetate binding site. Positions 113 and 132 each coordinate NAD(+). Oxaloacetate is bound by residues Asn-132, Arg-163, His-188, and Ser-243. The Proton acceptor role is filled by His-188.

The protein belongs to the LDH/MDH superfamily. MDH type 2 family. In terms of assembly, homodimer.

The protein localises to the cytoplasm. The catalysed reaction is (S)-malate + NAD(+) = oxaloacetate + NADH + H(+). In terms of biological role, catalyzes the reduction of the carbonyl group of oxalacetic acid. No activity with pulegone. In Nicotiana tabacum (Common tobacco), this protein is Malate dehydrogenase (MD1).